The following is a 507-amino-acid chain: Maturase K (507 aa).

It belongs to the intron maturase 2 family. MatK subfamily.

It localises to the plastid. Its subcellular location is the chloroplast. Usually encoded in the trnK tRNA gene intron. Probably assists in splicing its own and other chloroplast group II introns. The polypeptide is Maturase K (Magnolia figo (Banana shrub)).